A 598-amino-acid chain; its full sequence is Glutamine--fructose-6-phosphate aminotransferase [isomerizing] (598 aa).

Cys-2 acts as the Nucleophile; for GATase activity in catalysis. The region spanning 2–218 (CGIVGYIGNN…DLSLGYASKD (217 aa)) is the Glutamine amidotransferase type-2 domain. SIS domains lie at 277–421 (VFDE…KRNL) and 450–588 (LSKR…VDMP). Catalysis depends on Lys-593, which acts as the For Fru-6P isomerization activity.

As to quaternary structure, homodimer.

The protein localises to the cytoplasm. It catalyses the reaction D-fructose 6-phosphate + L-glutamine = D-glucosamine 6-phosphate + L-glutamate. Its function is as follows. Catalyzes the first step in hexosamine metabolism, converting fructose-6P into glucosamine-6P using glutamine as a nitrogen source. The protein is Glutamine--fructose-6-phosphate aminotransferase [isomerizing] of Campylobacter jejuni subsp. jejuni serotype O:2 (strain ATCC 700819 / NCTC 11168).